A 65-amino-acid chain; its full sequence is DNA-directed RNA polymerase subunit omega (65 aa).

This sequence belongs to the RNA polymerase subunit omega family. In terms of assembly, the RNAP catalytic core consists of 2 alpha, 1 beta, 1 beta' and 1 omega subunit. When a sigma factor is associated with the core the holoenzyme is formed, which can initiate transcription.

The enzyme catalyses RNA(n) + a ribonucleoside 5'-triphosphate = RNA(n+1) + diphosphate. In terms of biological role, promotes RNA polymerase assembly. Latches the N- and C-terminal regions of the beta' subunit thereby facilitating its interaction with the beta and alpha subunits. The polypeptide is DNA-directed RNA polymerase subunit omega (Baumannia cicadellinicola subsp. Homalodisca coagulata).